A 377-amino-acid polypeptide reads, in one-letter code: GDP-mannose 3,5-epimerase (377 aa).

An N-acetylglycine modification is found at Gly-2. Residues 34–60, Asp-58, and Asp-78 contribute to the NAD(+) site; that span reads GAGG…SDWK. Substrate-binding positions include Gly-103 and 143-145; that span reads SAC. The NAD(+) site is built by Tyr-174 and Lys-178. The active-site Proton acceptor is Tyr-174. Substrate-binding positions include Asn-203, 216–218, Lys-225, 241–243, Arg-306, and Ser-356; these read EKA and QTR. Ser-369 is modified (phosphoserine).

This sequence belongs to the NAD(P)-dependent epimerase/dehydratase family. In terms of assembly, homodimer. Interacts with chaperone Hsc70-3 protein, which may regulate epimerase activity. The cofactor is NAD(+).

The catalysed reaction is GDP-alpha-D-mannose = GDP-beta-L-gulose. The enzyme catalyses GDP-beta-L-gulose = GDP-beta-L-galactose. It functions in the pathway cofactor biosynthesis; L-ascorbate biosynthesis via GDP-alpha-D-mannose pathway; L-ascorbate from GDP-alpha-D-mannose: step 1/5. Inhibited by GDP and GDP-D-glucose. In terms of biological role, catalyzes a reversible epimerization of GDP-D-mannose that precedes the committed step in the biosynthesis of vitamin C (L-ascorbate), resulting in the hydrolysis of the highly energetic glycosyl-pyrophosphoryl linkage. Able to catalyze 2 distinct epimerization reactions and can release both GDP-L-galactose and GDP-L-gulose from GDP-mannose. The protein is GDP-mannose 3,5-epimerase of Arabidopsis thaliana (Mouse-ear cress).